A 580-amino-acid polypeptide reads, in one-letter code: uncharacterized protein (580 aa).

Residues 300–525 (PGYTATFLET…LRVLVELGYD (226 aa)) form the PE-PPE domain.

This sequence belongs to the mycobacterial PPE family.

This is an uncharacterized protein from Mycobacterium tuberculosis (strain CDC 1551 / Oshkosh).